Reading from the N-terminus, the 664-residue chain is Peroxisomal acyl-coenzyme A oxidase 1 (664 aa).

Residues Tyr-135, Gln-137, Thr-138, Ser-144, Gly-177, Arg-310, Gln-330, Arg-333, Gly-401, and Thr-422 each contribute to the FAD site. Catalysis depends on Glu-424, which acts as the Proton acceptor. Asp-426 provides a ligand contact to FAD. Residues Cys-467 and Cys-576 are joined by a disulfide bond. The Microbody targeting signal motif lies at 662–664; sequence ARL.

The protein belongs to the acyl-CoA oxidase family. Homodimer. FAD serves as cofactor. In terms of tissue distribution, expressed mainly in flowers and young seedlings. Lower expression in roots, leaves and bracts.

Its subcellular location is the peroxisome. It carries out the reaction a 2,3-saturated acyl-CoA + O2 = a (2E)-enoyl-CoA + H2O2. Catalyzes the desaturation of both long- and medium-chain acyl-CoAs to 2-trans-enoyl-CoAs. Most active with C14-CoA. Activity on long-chain mono-unsaturated substrates is 40% higher than with the corresponding saturated substrates. Seems to be an important factor in the general metabolism of root tips. May be involved in the biosynthesis of jasmonic acid. In Arabidopsis thaliana (Mouse-ear cress), this protein is Peroxisomal acyl-coenzyme A oxidase 1.